We begin with the raw amino-acid sequence, 308 residues long: UDP-N-acetylenolpyruvoylglucosamine reductase (308 aa).

Residues 24–187 (RVGGPADWLF…VSASLQGVPG (164 aa)) form the FAD-binding PCMH-type domain. The active site involves arginine 167. Positions 199–230 (QLDKRDQTQPTKERSAGSTFRNPAGFSSTGRA) are disordered. Over residues 200 to 213 (LDKRDQTQPTKERS) the composition is skewed to basic and acidic residues. The segment covering 214–228 (AGSTFRNPAGFSSTG) has biased composition (polar residues). The active-site Proton donor is serine 216. Residue glutamate 298 is part of the active site.

It belongs to the MurB family. It depends on FAD as a cofactor.

It localises to the cytoplasm. The enzyme catalyses UDP-N-acetyl-alpha-D-muramate + NADP(+) = UDP-N-acetyl-3-O-(1-carboxyvinyl)-alpha-D-glucosamine + NADPH + H(+). Its pathway is cell wall biogenesis; peptidoglycan biosynthesis. Cell wall formation. In Ruegeria pomeroyi (strain ATCC 700808 / DSM 15171 / DSS-3) (Silicibacter pomeroyi), this protein is UDP-N-acetylenolpyruvoylglucosamine reductase.